Consider the following 680-residue polypeptide: MYQNGKPDAPTILGQKRELEDVEIQDDDIQEVSKEDLLKDVRVRSIQFDELESKIEGLQNLAEEKLKVLATLVSWWPEILQQFSVVFQGNELKDFESEGVFSILEKFPELSYFNDAVKNNKTKALSIIQKLLSTVDSSTNSVSRDPFSVLSIDDSALTEKLNTINLDIDKILDELDTTRSQLHSIIKLPDRSSSFTLQCINESVRPQSTKVKEEATTSSKGKDEEKKVSTVEQRTQLQQLSRLQDQQNGLMESRSQSLKILDSNVNEMDKLIMERENALNNVETTNLKKYSSFLALKEAVSMTSEQLRVLEHLLSECSHEINVLSQQSKNFNGVFESSYQPLINDLDHQISVMQNDEKRINNAKTELSLSLEKKLEAKKQKEKVYKDKLDELANLETMVLEKKKAVATREAANKIRLVDLNDLELQKDLSTYLSKELASTEKAFRLVKQQTVKSSHSHYQELITKFSVEKEKAEQKYFLTMKSTDSLHAEVKLLRQKYQKTNEIISKMLNSQDTAVHRIIEFEDQLARLSSVRNNSIKQSTTFQVKKSSQKSTIQNLEEKVSYLQQFMDKNNATLTDLEFQCSDLSSSIDILSKQDEEHEKEKRKLKDTGVSTSAEELKTFRAMCKCSVCNFERWKDRIISLCGHGFCYQCIQKRIETRQRRCPICGRGFGASDVIPIHL.

Residues 44-72 (RSIQFDELESKIEGLQNLAEEKLKVLATL) adopt a coiled-coil conformation. The interval 206–233 (PQSTKVKEEATTSSKGKDEEKKVSTVEQ) is disordered. The span at 210–229 (KVKEEATTSSKGKDEEKKVS) shows a compositional bias: basic and acidic residues. Coiled coils occupy residues 261–288 (LDSNVNEMDKLIMERENALNNVETTNLK), 353–399 (MQND…ETMV), and 485–609 (DSLH…LKDT). The RING-type zinc finger occupies 627-667 (CSVCNFERWKDRIISLCGHGFCYQCIQKRIETRQRRCPICG).

This sequence belongs to the BRE1 family. In terms of assembly, component of the histone H2B ubiquitin ligase complex (HULC) composed of at least brl1, brl2, rhp6 and shf1.

It is found in the nucleus. The catalysed reaction is S-ubiquitinyl-[E2 ubiquitin-conjugating enzyme]-L-cysteine + [acceptor protein]-L-lysine = [E2 ubiquitin-conjugating enzyme]-L-cysteine + N(6)-ubiquitinyl-[acceptor protein]-L-lysine.. It functions in the pathway protein modification; protein ubiquitination. Functionally, E3 ubiquitin-protein ligase which belongs to the histone H2B ubiquitin ligase complex (HULC) which mediates monoubiquitination of histone H2B to form H2BK123ub1. H2BK123ub1 gives a specific tag for epigenetic transcriptional activation and is also a prerequisite for H3K4me and H3K79me formation. The polypeptide is E3 ubiquitin-protein ligase brl2 (brl2) (Schizosaccharomyces pombe (strain 972 / ATCC 24843) (Fission yeast)).